The sequence spans 190 residues: Glucose-6-phosphate isomerase (190 aa).

Histidine 89, histidine 91, glutamate 98, and histidine 137 together coordinate Fe cation.

The protein belongs to the archaeal-type GPI family. Homodimer. It depends on Fe cation as a cofactor.

It is found in the cytoplasm. It catalyses the reaction alpha-D-glucose 6-phosphate = beta-D-fructose 6-phosphate. It participates in carbohydrate degradation; glycolysis; D-glyceraldehyde 3-phosphate and glycerone phosphate from D-glucose: step 2/4. With respect to regulation, inhibited by mannose 6-phosphate, fructose 1-phosphate and fructose 1,6-bisphosphate. Its activity is also inhibited by Cobalt (II) ions &lt; EDTA &lt; nickel (II) ions &lt; zinc (II) ions &lt;&lt; cadmium (II) ions &lt; copper (II) ions. Sodium and potassium ions and manganese ions show little or no effect on activity. The chain is Glucose-6-phosphate isomerase (pgiA) from Thermococcus litoralis.